The chain runs to 189 residues: Cell division protein SepF (189 aa).

Polar residues predominate over residues 152–163 (FQEEPSPSSVMN). A disordered region spans residues 152-189 (FQEEPSPSSVMNKDNEGPVSESVMAPEPAWGASVPSAI).

This sequence belongs to the SepF family. As to quaternary structure, homodimer. Interacts with FtsZ.

Its subcellular location is the cytoplasm. In terms of biological role, cell division protein that is part of the divisome complex and is recruited early to the Z-ring. Probably stimulates Z-ring formation, perhaps through the cross-linking of FtsZ protofilaments. Its function overlaps with FtsA. This is Cell division protein SepF from Prochlorococcus marinus (strain SARG / CCMP1375 / SS120).